A 963-amino-acid polypeptide reads, in one-letter code: MRGLPGHERRWTSDTVSSGKDLSGESSPGTDSGNISGFASEEFVEVILDLQDDDTIILRSVEPATVINIDASDPATGVGIGGVSIETPASLTSTSGTRSPTMRRSTSNKLRQFSQELKAEAVAKAKHFSQELKAELRRFSWSHGHASRTFSPASFFQNAVVGTGNGVDSALAARALRRQRAQLDRTRSSAHKALRGLKFISNNKTNGWNEVENNFAKLAKDGYLYRSDFAQCIGMKDSKEFALELFDALSRRRRLKVDKISKEELYEYWSQITDQSFDSRLQIFFDMVDKNEDGRIGEEEVKEIIMLSASANKLSRLKEQAEEYAALIMEELDPERLGYIELWQLETLLLQKDTYLNYSQALSYTSQALSQNLQGLRKRSPIRRMSTKLVYSLQENWKRIWVLVLWILIMIGLFLWKFYLYKQKSAFQVMGYCLLTAKGAAETLKFNMALILLPVCRNTITFLRSTKLSCFVPFDDNINFHKTVAAAIVTGIILHAGNHLVCDFPKLIHANNTNYQKYLVNDFGPSQPQYIDLVKGVEGVTGIIMVILMAIAFTLATRWFRRSLIKFPKPFDRLTGFNAFWYSHHLLIIVYIVLIIHGTFLYLVHNWYSKTTWMYLAVPVLLYAGERTLRFFRSGLYTVRLLKVAIYPGNVLTLQMSKPPQFRYKSGQYMFVQCPAVSPFEWHPFSITSAPGDDYLSIHIRQLGDWTQELKRVFSEACEQPEAGKSGLLRADENTKTSLPKLLIDGPYGAPAQDYRKYDVLLLVGLGIGATPFISILKDLLKNIVTMEEQADLVSDFSGNSDMSAATSEQPALNKISPKKRKSTLKTTNAYFYWVTREQGSFDWFKGVMNEVAELDQRGVIEMHNYLTSVYEEGDARSALITMVQALNHAKNGVDIVSGTSVRTHFARPNWRKVFSKTLTKHANARIGVFYCGAPILAKELSKLCKEFNQKGTTKFEFHKEHF.

Residues 1-12 show a composition bias toward basic and acidic residues; it reads MRGLPGHERRWT. The segment at 1–36 is disordered; it reads MRGLPGHERRWTSDTVSSGKDLSGESSPGTDSGNIS. Over 1 to 399 the chain is Cytoplasmic; sequence MRGLPGHERR…VYSLQENWKR (399 aa). Over residues 13-36 the composition is skewed to polar residues; sequence SDTVSSGKDLSGESSPGTDSGNIS. 2 EF-hand-like regions span residues 219 to 227 and 253 to 264; these read AKDGYLYRS and RRLKVDKISKEE. Residues 276–311 enclose the EF-hand domain; the sequence is SFDSRLQIFFDMVDKNEDGRIGEEEVKEIIMLSASA. The Ca(2+) site is built by Asp-289, Asn-291, Asp-293, Arg-295, and Glu-300. Residues 400–420 traverse the membrane as a helical segment; that stretch reads IWVLVLWILIMIGLFLWKFYL. Topologically, residues 421-435 are extracellular; sequence YKQKSAFQVMGYCLL. Residues 436–456 traverse the membrane as a helical segment; sequence TAKGAAETLKFNMALILLPVC. One can recognise a Ferric oxidoreductase domain in the interval 438–595; sequence KGAAETLKFN…LLIIVYIVLI (158 aa). Residues 457 to 482 lie on the Cytoplasmic side of the membrane; that stretch reads RNTITFLRSTKLSCFVPFDDNINFHK. A helical membrane pass occupies residues 483-503; that stretch reads TVAAAIVTGIILHAGNHLVCD. Topologically, residues 504 to 535 are extracellular; the sequence is FPKLIHANNTNYQKYLVNDFGPSQPQYIDLVK. Residues 536 to 556 form a helical membrane-spanning segment; sequence GVEGVTGIIMVILMAIAFTLA. Over 557-583 the chain is Cytoplasmic; sequence TRWFRRSLIKFPKPFDRLTGFNAFWYS. A helical transmembrane segment spans residues 584-604; it reads HHLLIIVYIVLIIHGTFLYLV. Over 605–759 the chain is Extracellular; it reads HNWYSKTTWM…APAQDYRKYD (155 aa). The 121-residue stretch at 634–754 folds into the FAD-binding FR-type domain; that stretch reads SGLYTVRLLK…DGPYGAPAQD (121 aa). A helical membrane pass occupies residues 760-780; that stretch reads VLLLVGLGIGATPFISILKDL. The Cytoplasmic segment spans residues 781-963; the sequence is LKNIVTMEEQ…TKFEFHKEHF (183 aa).

It belongs to the RBOH (TC 5.B.1.3) family. In terms of assembly, monomer and homodimer. In terms of processing, phosphorylated by CPK.

Its subcellular location is the cell membrane. In terms of biological role, calcium-dependent NADPH oxidase that generates superoxide. Involved in the rapid and transient phase I oxidative burst induced by pathogen infection. This is Respiratory burst oxidase homolog protein A (RBOHA) from Solanum tuberosum (Potato).